A 149-amino-acid polypeptide reads, in one-letter code: UPF0179 protein TON_1048 (149 aa).

This sequence belongs to the UPF0179 family.

This is UPF0179 protein TON_1048 from Thermococcus onnurineus (strain NA1).